Reading from the N-terminus, the 207-residue chain is MNINAPPKRIGIMGGTFDPLHYGHLVAAEMARHEFALEKVIFIPTGNPPHKVGRRVTSPGDRYEMVKRAVQDNSFFEVSDLEIQRKGYSYTVDTLKELHELYPQHELYFITGADAFREIFTWREVQSVLSLSHFIGASRPGFDPLEFLEELKRDYPEFLPNMHLFDVPALAISSTDIRSRVKEGKPIRYLLPESVRLYIEKTGLYRI.

The protein belongs to the NadD family.

The catalysed reaction is nicotinate beta-D-ribonucleotide + ATP + H(+) = deamido-NAD(+) + diphosphate. The protein operates within cofactor biosynthesis; NAD(+) biosynthesis; deamido-NAD(+) from nicotinate D-ribonucleotide: step 1/1. Functionally, catalyzes the reversible adenylation of nicotinate mononucleotide (NaMN) to nicotinic acid adenine dinucleotide (NaAD). In Desulfitobacterium hafniense (strain Y51), this protein is Probable nicotinate-nucleotide adenylyltransferase.